A 434-amino-acid polypeptide reads, in one-letter code: MSRLSKEEISERLLELIKDETKPAIGCTEPVAVAFTVATGKKYMQGEILKIDLKVSKNILKNGKSVTIPNTEVCGLDIAGALGGICGDPEEGLFVFKNVNKDYLDKAREMIKNKVVTLNPIENTDPVFVEATLKGEKDEVIVILRRGHTNIEKVIVNGEIAFEKDNKNEKDNKDCDFMKELSLKDIREITEDISIEKLGFIMDGIEMNKEAAKEGLKRQKGLTLGSSLLKLQQEGKLGKDSATIARILTAAGSDLRMGGGMCPIMTSGGSGNQGLCVILPITVVAEDIKAPKEKLQRAVFFGHAVNNFVKKYTGKLSAICGCAIAAGIGATAGITWLLGGKDKEINGAILNMLANLTGMVCDGAKGSCAIKLSTSASEAVISAYLALNDIIVPNNTGIIGNTVEDTINNLGMLCKDGFYKADDVMLSIACKEVI.

This sequence belongs to the UPF0597 family.

The sequence is that of UPF0597 protein CLD_2616 from Clostridium botulinum (strain Okra / Type B1).